The primary structure comprises 355 residues: MLDRLQAVENRYEKLNELLSDPAIISDSNKLREYSKEQSDIQETVEVYREYKDVREQLKDAKAMLEDKLDAEMREMVKEEVSELESQEKTLSERLKILLVPKDPNDDKNVIVEVRGAAGGDEAALFAGDLYRMYSRYAEVQGWKTEIIEASYTELGGYKEIIFMINGKGAFAKLKFENGAHRVQRVPETESGGRIHTSTATVAVLPEAEEVEIDIHEKDVRVDTFASSGPGGQSVNTTMSAVRLTHLPTGVVVSCQDEKSQIKNKEKAMKVLRARVYDKFRQEAQAEYDQNRKQAVGTGDRSERIRTYNFPQNRVTDHRIGLTIQKLDQILQGKLDDFINALVMEDQAQRMEAAE.

At glutamine 233 the chain carries N5-methylglutamine.

Belongs to the prokaryotic/mitochondrial release factor family. Methylated by PrmC. Methylation increases the termination efficiency of RF1.

Its subcellular location is the cytoplasm. Its function is as follows. Peptide chain release factor 1 directs the termination of translation in response to the peptide chain termination codons UAG and UAA. This is Peptide chain release factor 1 from Bacillus anthracis.